The primary structure comprises 277 residues: Undecaprenyl-diphosphatase (277 aa).

Helical transmembrane passes span 5 to 25 (WTAAQALILGVVEGLTEFLPI), 44 to 64 (RAMAFNIIIQLGAILAVVWEF), 86 to 106 (LNLLIAFMPAVVLGVIFADTI), 110 to 130 (LFNAITVATALVVGGVIMLWA), 184 to 204 (AATEFSFFLAMPTMVGAAVYS), 219 to 239 (VFAIGFITSFIFAMIAVRALL), and 255 to 275 (IAFGLLILATWQFGWIDWASA).

Belongs to the UppP family.

Its subcellular location is the cell inner membrane. The catalysed reaction is di-trans,octa-cis-undecaprenyl diphosphate + H2O = di-trans,octa-cis-undecaprenyl phosphate + phosphate + H(+). Functionally, catalyzes the dephosphorylation of undecaprenyl diphosphate (UPP). Confers resistance to bacitracin. The sequence is that of Undecaprenyl-diphosphatase from Pseudomonas savastanoi pv. phaseolicola (strain 1448A / Race 6) (Pseudomonas syringae pv. phaseolicola (strain 1448A / Race 6)).